The primary structure comprises 290 residues: Ribosomal RNA small subunit methyltransferase A (290 aa).

Positions 27, 29, 54, 75, 100, and 125 each coordinate S-adenosyl-L-methionine.

It belongs to the class I-like SAM-binding methyltransferase superfamily. rRNA adenine N(6)-methyltransferase family. RsmA subfamily.

Its subcellular location is the cytoplasm. The enzyme catalyses adenosine(1518)/adenosine(1519) in 16S rRNA + 4 S-adenosyl-L-methionine = N(6)-dimethyladenosine(1518)/N(6)-dimethyladenosine(1519) in 16S rRNA + 4 S-adenosyl-L-homocysteine + 4 H(+). Functionally, specifically dimethylates two adjacent adenosines (A1518 and A1519) in the loop of a conserved hairpin near the 3'-end of 16S rRNA in the 30S particle. May play a critical role in biogenesis of 30S subunits. The protein is Ribosomal RNA small subunit methyltransferase A of Streptococcus sanguinis (strain SK36).